We begin with the raw amino-acid sequence, 406 residues long: Aspartokinase (406 aa).

The ACT domain maps to 342-406 (IIGHGIKNDL…LLKISETGHC (65 aa)).

It belongs to the aspartokinase family.

It carries out the reaction L-aspartate + ATP = 4-phospho-L-aspartate + ADP. The protein operates within amino-acid biosynthesis; L-lysine biosynthesis via DAP pathway; (S)-tetrahydrodipicolinate from L-aspartate: step 1/4. Its pathway is amino-acid biosynthesis; L-methionine biosynthesis via de novo pathway; L-homoserine from L-aspartate: step 1/3. It participates in amino-acid biosynthesis; L-threonine biosynthesis; L-threonine from L-aspartate: step 1/5. The chain is Aspartokinase (lysC) from Rickettsia bellii (strain RML369-C).